The sequence spans 653 residues: Zinc finger protein 59 (653 aa).

A KRAB domain is found at 14–86 (VTFRDVAVDF…VNEETGRPSP (73 aa)). 16 consecutive C2H2-type zinc fingers follow at residues 172–194 (YECK…QSVH), 200–222 (YECK…QKCH), 256–278 (FACR…GLIH), 284–306 (YECN…QKIH), 312–334 (FQCK…QSSH), 340–362 (FECE…QRIH), 368–390 (FECN…QKTH), 396–418 (LECN…LKTH), 424–446 (FKCK…LTVH), 452–474 (YQCK…ESIH), 480–502 (FQCE…QKSH), 508–530 (FECK…KIVH), 536–558 (FECK…GAVH), 564–586 (YECS…RKIH), 592–614 (FKCQ…QSIH), and 620–642 (FECE…LRIH).

The protein belongs to the krueppel C2H2-type zinc-finger protein family. In terms of tissue distribution, expressed predominantly in the testis (at protein level).

Its subcellular location is the nucleus. Its function is as follows. May have a role during differentiation processes. In Mus musculus (Mouse), this protein is Zinc finger protein 59 (Zfp59).